The primary structure comprises 89 residues: Small ribosomal subunit protein uS17 (89 aa).

This sequence belongs to the universal ribosomal protein uS17 family. As to quaternary structure, part of the 30S ribosomal subunit.

In terms of biological role, one of the primary rRNA binding proteins, it binds specifically to the 5'-end of 16S ribosomal RNA. The protein is Small ribosomal subunit protein uS17 of Xylella fastidiosa (strain Temecula1 / ATCC 700964).